A 227-amino-acid polypeptide reads, in one-letter code: Dephospho-CoA kinase (227 aa).

The 197-residue stretch at 31–227 folds into the DPCK domain; sequence KIGLTGGIGS…EKLFQFINCL (197 aa). Residue 39–44 participates in ATP binding; the sequence is GSGKST.

The protein belongs to the CoaE family.

It localises to the cytoplasm. It catalyses the reaction 3'-dephospho-CoA + ATP = ADP + CoA + H(+). It participates in cofactor biosynthesis; coenzyme A biosynthesis; CoA from (R)-pantothenate: step 5/5. In terms of biological role, catalyzes the phosphorylation of the 3'-hydroxyl group of dephosphocoenzyme A to form coenzyme A. The protein is Dephospho-CoA kinase of Clostridium tetani (strain Massachusetts / E88).